The sequence spans 1292 residues: Calcium-transporting ATPase 2 (1292 aa).

Residues 1–105 are disordered; that stretch reads MPTYNDDDDS…EQASSKSSTS (105 aa). Residues 1–236 are Cytoplasmic-facing; it reads MPTYNDDDDS…RLMLEAFKDK (236 aa). Residues 23 to 41 are compositionally biased toward polar residues; that stretch reads KPSSSQFLGVPSSNYNQRE. Positions 44-60 are enriched in low complexity; the sequence is SRSGSSTISREPSSSGT. Basic and acidic residues predominate over residues 68 to 78; sequence DSMKESYDKNK. Residues 237–257 form a helical membrane-spanning segment; the sequence is VLILLSIAAVVSLALGLYQTF. The Vacuolar segment spans residues 258–273; it reads GQPPTLDPITGKPEPR. A helical transmembrane segment spans residues 274-294; it reads VEWVEGVAIMAAIVIVVTVGG. Topologically, residues 295–448 are cytoplasmic; the sequence is VNDWQKELQF…QLRLSRVADA (154 aa). Residues 449–469 form a helical membrane-spanning segment; it reads IAKLGGAASALLFIVLLIEFL. Over 470-488 the chain is Vacuolar; sequence VRLKSNDSSSKNKGQEFLQ. A helical transmembrane segment spans residues 489-509; it reads ILIVSVTLLVVAVPEGLPLAV. V498 and E503 together coordinate Ca(2+). Over 510–938 the chain is Cytoplasmic; the sequence is TLALAFATNR…GRTVNDAVKK (429 aa). The 4-aspartylphosphate intermediate role is filled by D545. Mg(2+)-binding residues include D545 and T547. Residues T547, E638, K691, R736, 807 to 809, R856, and K862 contribute to the ATP site; that span reads TGD. D881 is a Mg(2+) binding site. An ATP-binding site is contributed by N884. A helical transmembrane segment spans residues 939–959; it reads FLQFQITVNITAVFLTIISAV. Residue N947 coordinates Ca(2+). The Vacuolar portion of the chain corresponds to 960–966; that stretch reads ASTDQSS. Residues 967–987 traverse the membrane as a helical segment; sequence VLTAVQLLWVNLIMDTLAALA. N977 and D981 together coordinate Ca(2+). The Cytoplasmic portion of the chain corresponds to 988–1016; sequence LATDPPTPEVLKRKPEKPGASLFTFDMWK. A helical membrane pass occupies residues 1017-1037; the sequence is MIICQSMYQLAVTLVLHFAGN. The Vacuolar segment spans residues 1038–1084; the sequence is SIFHYPSNTADMNTIVFNTFVWLQLFNEINNRRLDNKLNIFERINHN. The chain crosses the membrane as a helical span at residues 1085 to 1105; it reads FLFIAIFVIVAGIQVIIVFFG. Over 1106 to 1115 the chain is Cytoplasmic; it reads GAAFSVKRID. A helical transmembrane segment spans residues 1116 to 1136; sequence GKGWAISIVFGVISIPLGALI. The Vacuolar portion of the chain corresponds to 1137 to 1292; sequence RCVPNNFLRK…ALDKKSSNVH (156 aa).

This sequence belongs to the cation transport ATPase (P-type) (TC 3.A.3) family.

Its subcellular location is the vacuole membrane. The catalysed reaction is Ca(2+)(in) + ATP + H2O = Ca(2+)(out) + ADP + phosphate + H(+). This magnesium-dependent enzyme catalyzes the hydrolysis of ATP coupled with the transport of calcium. Transports the calcium to the vacuole and participates in the control of the cytosolic free calcium. The polypeptide is Calcium-transporting ATPase 2 (pmc1) (Schizosaccharomyces pombe (strain 972 / ATCC 24843) (Fission yeast)).